Here is a 199-residue protein sequence, read N- to C-terminus: Outer-membrane lipoprotein LolB (199 aa).

The signal sequence occupies residues 1-28 (MSACPAPRSPFRWLHAFTLCLLLAVLAG). Residue C29 is the site of N-palmitoyl cysteine attachment. Residue C29 is the site of S-diacylglycerol cysteine attachment.

It belongs to the LolB family. Monomer.

The protein resides in the cell outer membrane. Functionally, plays a critical role in the incorporation of lipoproteins in the outer membrane after they are released by the LolA protein. The polypeptide is Outer-membrane lipoprotein LolB (Bordetella bronchiseptica (strain ATCC BAA-588 / NCTC 13252 / RB50) (Alcaligenes bronchisepticus)).